The chain runs to 261 residues: WW domain-binding protein 2 (261 aa).

The region spanning 1–84 (MALNKNHSEG…YLMKDCEIKQ (84 aa)) is the GRAM domain. The residue at position 192 (Y192) is a Phosphotyrosine; by YES and SRC. The PPxY motif 1 motif lies at 196 to 200 (PPPPY). Over residues 196-209 (PPPPYPGPMEPPVS) the composition is skewed to pro residues. Residues 196–261 (PPPPYPGPME…YYPPEDKKTQ (66 aa)) are disordered. The segment covering 218 to 230 (AAEAKAAEAAASA) has biased composition (low complexity). Y231 carries the phosphotyrosine; by YES and SRC modification. Pro residues predominate over residues 245-254 (SQPPPPPYYP). The short motif at 248 to 252 (PPPPY) is the PPxY motif 2 element.

In terms of assembly, binds to the WW domain of YAP1, WWP1 and WWP2. Interacts with NEDD4. Interacts with ESR1 and UBE3A. Phosphorylated in repsonse to EGF as well as estrogen and progesterone hormones. Tyr-192 and Tyr-231 are phosphorylated by YES and SRC inducing nuclear translocation. In terms of tissue distribution, ubiquitous.

Its subcellular location is the cytoplasm. It is found in the nucleus. Acts as a transcriptional coactivator of estrogen and progesterone receptors (ESR1 and PGR) upon hormone activation. In presence of estrogen, binds to ESR1-responsive promoters. Synergizes with YAP1 to enhance PGR activity. Modulates expression of post-synaptic scaffolding proteins via regulation of ESR1, ESR2 and PGR. This Homo sapiens (Human) protein is WW domain-binding protein 2.